Here is a 289-residue protein sequence, read N- to C-terminus: Caffeoylpyruvate hydrolase (289 aa).

3 residues coordinate a divalent metal cation: E140, E142, and D171.

Belongs to the FAH family. Homodimer. Mg(2+) serves as cofactor. Requires Mn(2+) as cofactor.

It carries out the reaction (E)-caffeoylpyruvate + H2O = (E)-caffeate + pyruvate + H(+). The protein operates within secondary metabolite biosynthesis. Its function is as follows. Caffeoylpyruvate hydrolase; part of the gene cluster that mediates the fungal bioluminescence cycle. Involved in the recycling of oxyluciferin, a pyruvic acid adduct of caffeic acid, to caffeic acid. The fungal bioluminescence cycle begins with the hispidin synthetase that catalyzes the formation of hispidin which is further hydroxylated by the hispidin-3-hydroxylase, yielding the fungal luciferin 3-hydroxyhispidin. The luciferase then produces an endoperoxide as a high-energy intermediate with decomposition that yields oxyluciferin (also known as caffeoylpyruvate) and light emission. Oxyluciferin can be recycled to caffeic acid by caffeoylpyruvate hydrolase. The protein is Caffeoylpyruvate hydrolase of Neonothopanus nambi (Agaricus nambi).